The sequence spans 499 residues: Heparin cofactor 2 (499 aa).

An N-terminal signal peptide occupies residues 1–19 (MKHSLNALLIFLIITSAWG). At serine 37 the chain carries Phosphoserine; by FAM20C. Residue asparagine 49 is glycosylated (N-linked (GlcNAc...) (complex) asparagine). A chemotactic activity region spans residues 68–79 (DWIPEGEEDDDY). A run of 2 repeats spans residues 73–83 (GEEDDDYLDLE) and 87–97 (SEDDDYIDIVD). A 2 X 11 AA approximate repeats, Asp/Glu-rich (acidic) (hirudin-like) region spans residues 73 to 97 (GEEDDDYLDLEKIFSEDDDYIDIVD). 2 positions are modified to sulfotyrosine: tyrosine 79 and tyrosine 92. The N-linked (GlcNAc...) asparagine glycan is linked to asparagine 188. Residues 192-212 (KYEITTIHNLFRKLTHRLFRR) form a glycosaminoglycan-binding site region. A glycan (N-linked (GlcNAc...) asparagine) is linked at asparagine 387.

This sequence belongs to the serpin family. In terms of processing, phosphorylated by FAM20C in the extracellular medium. Expressed predominantly in liver. Also present in plasma. As to expression, expressed in plasma (at protein level). Expressed in liver.

Thrombin inhibitor activated by the glycosaminoglycans, heparin or dermatan sulfate. In the presence of the latter, HC-II becomes the predominant thrombin inhibitor in place of antithrombin III (AT-III). Also inhibits chymotrypsin, but in a glycosaminoglycan-independent manner. In terms of biological role, peptides at the N-terminal of HC-II have chemotactic activity for both monocytes and neutrophils. Its function is as follows. Shows negligible inhibition, in vitro, of thrombin and tPA and no inhibition of factor Xa, in vitro. This Homo sapiens (Human) protein is Heparin cofactor 2 (SERPIND1).